We begin with the raw amino-acid sequence, 659 residues long: Protein SCARECROW 1 (659 aa).

Disordered regions lie at residues 1 to 33 (MGSSSLLLFPSSSSSATHSSYSPSSSSHAITSL) and 188 to 285 (SDPA…KQRD). The span at 190–228 (PAPPPPPPPSHPALLPPDATAPPPPPTSVAALPPPPPPQ) shows a compositional bias: pro residues. Residues 258 to 271 (AAAAAAAAAAALAA) are compositionally biased toward low complexity. The stretch at 258–289 (AAAAAAAAAAALAAAKERKEEQRRKQRDEEGL) forms a coiled coil. Residues 272-285 (AKERKEEQRRKQRD) are compositionally biased toward basic and acidic residues. The 371-residue stretch at 282–652 (KQRDEEGLHL…LCLLTASAWR (371 aa)) folds into the GRAS domain. The interval 289 to 353 (LHLLTLLLQC…VSSCLGLYAP (65 aa)) is leucine repeat I (LRI). A LxCxE motif motif is present at residues 296–300 (LQCAE). The interval 372-437 (FQVFNGISPF…GGPPRVRLTG (66 aa)) is VHIID. The VHIID motif lies at 403 to 407 (VHIID). The segment at 447 to 479 (ATGKRLSDFADTLGLPFEFCPVADKAGNLDPEK) is leucine repeat II (LRII). The interval 488–575 (VAVHWLRHSL…QQLLSREIRN (88 aa)) is PFYRE. The segment at 578-652 (AVGGPARTGD…LCLLTASAWR (75 aa)) is SAW.

Belongs to the GRAS family. As to quaternary structure, interacts with SHR1, but not with SHR2.

Its subcellular location is the nucleus. Functionally, transcription factor required for quiescent center cells specification and maintenance of surrounding stem cells, and for the asymmetric cell division involved in radial pattern formation in roots. Essential for cell division but not differentiation of the ground tissue. Regulates the radial organization of the shoot axial organs. Restricts SHR movment and sequesters it into the nucleus of the endodermis. This is Protein SCARECROW 1 (SCR1) from Oryza sativa subsp. indica (Rice).